The chain runs to 2222 residues: Voltage-dependent R-type calcium channel subunit alpha-1E (2222 aa).

The Cytoplasmic segment spans residues 1–40 (MALYNPIPVRQNCFTVNRSLFIFGEDNIVRKYAKKLIDWP). One copy of the I repeat lies at 27 to 305 (NIVRKYAKKL…LVLGVLSGEF (279 aa)). A helical transmembrane segment spans residues 41–59 (PFEYMILATIIANCIVLAL). The Extracellular segment spans residues 60–78 (EQHLPEDDKTPMSRRLEKT). Residues 79–97 (EPYFIGIFCFEAGIKIVAL) traverse the membrane as a helical segment. The Cytoplasmic portion of the chain corresponds to 98–109 (GFIFHKGSYLRN). The helical transmembrane segment at 110 to 124 (GWNVMDFIVVLSGIL) threads the bilayer. The Extracellular portion of the chain corresponds to 125 to 136 (ATAGTHFNTHVD). Residues 137-156 (LRTLRAVRVLRPLKLVSGIP) traverse the membrane as a helical segment. Residues 157–174 (SLQIVLKSIMKAMVPLLQ) are Cytoplasmic-facing. The helical transmembrane segment at 175–195 (IGLLLFFAILMFAIIGLEFYS) threads the bilayer. Residues 196–277 (GKLHRACFMN…NTNDALGATW (82 aa)) are Extracellular-facing. N205 carries N-linked (GlcNAc...) asparagine glycosylation. The chain crosses the membrane as a helical span at residues 278–301 (NWLYFIPLIIIGSFFVLNLVLGVL). The Cytoplasmic portion of the chain corresponds to 302–427 (SGEFAKERER…ISIRHMVKSQ (126 aa)). Residues 325 to 342 (QQIERELNGYRAWIDKAE) form a binding to the beta subunit region. Position 377 (D377) interacts with Ca(2+). Residue S378 is modified to Phosphoserine. Residues S379, E381, and C383 each coordinate Ca(2+). Phosphothreonine is present on T391. The stretch at 413-657 (ERLLRISIRH…VFLAIAVDNL (245 aa)) is one II repeat. A helical transmembrane segment spans residues 428–447 (VFYWIVLSVVALNTACVAIV). Residues 448 to 460 (HHNQPQWLTHLLY) are Extracellular-facing. The helical transmembrane segment at 461 to 480 (YAEFLFLGLFLLEMSLKMYG) threads the bilayer. Topologically, residues 481-489 (MGPRLYFHS) are cytoplasmic. The chain crosses the membrane as a helical span at residues 490–508 (SFNCFDFGVTVGSIFEVVW). Residues 509–518 (AIFRPGTSFG) are Extracellular-facing. A helical transmembrane segment spans residues 519 to 537 (ISVLRALRLLRIFKITKYW). Topologically, residues 538 to 556 (ASLRNLVVSLMSSMKSIIS) are cytoplasmic. Residues 557-576 (LLFLLFLFIVVFALLGMQLF) form a helical membrane-spanning segment. Over 577–629 (GGRFNFNDGTPSANFDTFPAAIMTVFQILTGEDWNEVMYNGIRSQGGVSSGMW) the chain is Extracellular. The helical transmembrane segment at 630–654 (SAIYFIVLTLFGNYTLLNVFLAIAV) threads the bilayer. Residues 655 to 1100 (DNLANAQELT…TNPIRKACHY (446 aa)) are Cytoplasmic-facing. The segment at 680-727 (LQKAKEVSPMSAPNMPSIERDRRRRHHMSMWEPRSSHLRERRRRHHMS) is disordered. A phosphoserine mark is found at S687, S696, S744, S766, and S806. Disordered regions lie at residues 820 to 944 (NQRS…VPRG) and 1042 to 1076 (NKTDGEASPLKEAETKEEEEEVEKKKQKKEKRETG). Over residues 864–877 (RHRQSQRRSRHRRV) the composition is skewed to basic residues. Low complexity predominate over residues 884 to 896 (SASASRSRSASQE). A Phosphoserine modification is found at S898. 2 stretches are compositionally biased toward basic and acidic residues: residues 906 to 935 (DGEKEHEPQSSHRSKEPTIHEEERTQDLRR) and 1044 to 1055 (TDGEASPLKEAE). A Phosphoserine modification is found at S1049. An III repeat occupies 1092 to 1378 (NPIRKACHYI…IFVALIIITF (287 aa)). The helical transmembrane segment at 1101-1117 (IVNLRYFEMCILLVIAA) threads the bilayer. The Extracellular portion of the chain corresponds to 1118-1141 (SSIALAAEDPVLTNSERNKVLRYF). The helical transmembrane segment at 1142-1161 (DYVFTGVFTFEMVIKMIDQG) threads the bilayer. Residues 1162–1169 (LILQDGSY) are Cytoplasmic-facing. Residues 1170–1192 (FRDLWNILDFVVVVGALVAFALA) traverse the membrane as a helical segment. Topologically, residues 1193-1206 (NALGTNKGRDIKTI) are extracellular. Residues 1207-1224 (KSLRVLRVLRPLKTIKRL) traverse the membrane as a helical segment. Residues 1225-1243 (PKLKAVFDCVVTSLKNVFN) are Cytoplasmic-facing. Residues 1244–1263 (ILIVYKLFMFIFAVIAVQLF) traverse the membrane as a helical segment. Residues 1264 to 1350 (KGKFFYCTDS…RGPSRSNRME (87 aa)) are Extracellular-facing. Residues 1351-1374 (MSIFYVVYFVVFPFFFVNIFVALI) traverse the membrane as a helical segment. Over 1375-1431 (IITFQEQGDKMMEECSLEKNERACIDFAISAKPLTRYMPQNRHTFQYRVWHFVVSPS) the chain is Cytoplasmic. One copy of the IV repeat lies at 1415-1678 (NRHTFQYRVW…LFVAVIMDNF (264 aa)). Residues 1432–1450 (FEYTIMAMIALNTVVLMMK) form a helical membrane-spanning segment. Residues 1451 to 1467 (YYSAPWTYELALKYLNI) lie on the Extracellular side of the membrane. A helical transmembrane segment spans residues 1468-1485 (AFTMVFSLECVLKVIAFG). The Cytoplasmic segment spans residues 1486–1493 (FLNYFRDT). The helical transmembrane segment at 1494 to 1512 (WNIFDFITVIGSITEIILT) threads the bilayer. Topologically, residues 1513–1523 (DSKLVNTSGFN) are extracellular. N-linked (GlcNAc...) asparagine glycosylation is found at N1518 and N1523. Residues 1524-1542 (MSFLKLFRAARLIKLLRQG) traverse the membrane as a helical segment. The Cytoplasmic portion of the chain corresponds to 1543–1561 (YTIRILLWTFVQSFKALPY). A helical membrane pass occupies residues 1562–1581 (VCLLIAMLFFIYAIIGMQVF). The Extracellular segment spans residues 1582–1650 (GNIKLDEESH…NESERCGTDL (69 aa)). N-linked (GlcNAc...) asparagine glycosylation occurs at N1641. Residues 1651–1676 (AYVYFVSFIFFCSFLMLNLFVAVIMD) traverse the membrane as a helical segment. Over 1677-2222 (NFEYLTRDSS…LSDTEEDDKC (546 aa)) the chain is Cytoplasmic. An EF-hand domain is found at 1691 to 1726 (HHLDEFVRVWAEYDRAACGRIHYTEMYEMLTLMSPP). Residues D1704, R1710, and E1715 each coordinate Ca(2+). The disordered stretch occupies residues 1970–2135 (SAHRLNSDSG…QQGQHPSPQH (166 aa)). Basic and acidic residues predominate over residues 1974 to 1994 (LNSDSGHKSDTHRSGGRERGR). 2 positions are modified to phosphoserine: S2003 and S2022. Over residues 2010–2027 (NSEERGTQADWESPERRQ) the composition is skewed to basic and acidic residues. Low complexity predominate over residues 2046-2061 (SLSESSIPSISDTSTP). Residues 2104 to 2123 (LASQALESNSACLTESSNSL) show a composition bias toward polar residues. Residues 2124–2135 (HPQQGQHPSPQH) are compositionally biased toward low complexity.

The protein belongs to the calcium channel alpha-1 subunit (TC 1.A.1.11) family. CACNA1E subfamily. As to quaternary structure, interacts with EFHC1. Voltage-dependent calcium channels are multisubunit complexes, consisting of alpha-1, alpha-2, beta and delta subunits in a 1:1:1:1 ratio. The channel activity is directed by the pore-forming and voltage-sensitive alpha-1 subunit. In many cases, this subunit is sufficient to generate voltage-sensitive calcium channel activity. The auxiliary subunits beta and alpha-2/delta linked by a disulfide bridge regulate the channel activity. Expressed in central nervous system and in insulinoma.

It is found in the membrane. The enzyme catalyses Ca(2+)(in) = Ca(2+)(out). Functionally, voltage-sensitive calcium channels (VSCC) mediate the entry of calcium ions into excitable cells and are also involved in a variety of calcium-dependent processes, including muscle contraction, hormone or neurotransmitter release, gene expression, cell motility, cell division and cell death. The isoform alpha-1E gives rise to R-type calcium currents. R-type calcium channels belong to the 'high-voltage activated' (HVA) group and are blocked by nickel. They are however insensitive to dihydropyridines (DHP). Calcium channels containing alpha-1E subunit could be involved in the modulation of firing patterns of neurons which is important for information processing. The sequence is that of Voltage-dependent R-type calcium channel subunit alpha-1E (Cacna1e) from Rattus norvegicus (Rat).